A 427-amino-acid polypeptide reads, in one-letter code: Anaerobic glycerol-3-phosphate dehydrogenase subunit B (427 aa).

This sequence belongs to the anaerobic G-3-P dehydrogenase subunit B family. Composed of a catalytic GlpA/B dimer and of membrane bound GlpC. FMN is required as a cofactor.

The catalysed reaction is a quinone + sn-glycerol 3-phosphate = dihydroxyacetone phosphate + a quinol. Its pathway is polyol metabolism; glycerol degradation via glycerol kinase pathway; glycerone phosphate from sn-glycerol 3-phosphate (anaerobic route): step 1/1. Its function is as follows. Conversion of glycerol 3-phosphate to dihydroxyacetone. Uses fumarate or nitrate as electron acceptor. The chain is Anaerobic glycerol-3-phosphate dehydrogenase subunit B from Glaesserella parasuis serovar 5 (strain SH0165) (Haemophilus parasuis).